A 263-amino-acid chain; its full sequence is Dihydropteroate synthase type-3 (263 aa).

One can recognise a Pterin-binding domain in the interval 2–257 (SKIFGIVNIT…DVKSLSDALK (256 aa)). Residue Asn-9 coordinates Mg(2+). Ser-49 serves as a coordination point for 4-aminobenzoate. 3 residues coordinate (7,8-dihydropterin-6-yl)methyl diphosphate: Asp-82, Asn-101, and Asp-172. Residues Asn-101 and Asp-172 each contribute to the 6-hydroxymethyl-7,8-dihydropterin site. Position 177 (Phe-177) interacts with 4-aminobenzoate. (7,8-dihydropterin-6-yl)methyl diphosphate is bound at residue Lys-211. Lys-211 contacts 6-hydroxymethyl-7,8-dihydropterin. Residue Ser-212 participates in 4-aminobenzoate binding. Residue 245–247 (RTH) coordinates (7,8-dihydropterin-6-yl)methyl diphosphate.

The protein belongs to the DHPS family. Mg(2+) serves as cofactor.

The enzyme catalyses (7,8-dihydropterin-6-yl)methyl diphosphate + 4-aminobenzoate = 7,8-dihydropteroate + diphosphate. The protein operates within cofactor biosynthesis; tetrahydrofolate biosynthesis; 7,8-dihydrofolate from 2-amino-4-hydroxy-6-hydroxymethyl-7,8-dihydropteridine diphosphate and 4-aminobenzoate: step 1/2. Catalyzes the condensation of para-aminobenzoate (pABA) with 6-hydroxymethyl-7,8-dihydropterin diphosphate (DHPt-PP) to form 7,8-dihydropteroate (H2Pte), the immediate precursor of folate derivatives. Confers resistance to sulfonamide antibiotics, including sulfamethoxazole (SMX), sulfadiazine and sulfisoxazole. In Escherichia coli, this protein is Dihydropteroate synthase type-3.